The primary structure comprises 847 residues: A-kinase anchor protein 4 (847 aa).

The propeptide occupies 1–187 (MIAYCGTTKM…MAASKNTNNN (187 aa)). Phosphoserine is present on residues Ser95, Ser129, Ser189, and Ser203. Residues 182 to 204 (KNTNNNQSPSNPATKSPSNQRSV) show a composition bias toward polar residues. The interval 182 to 209 (KNTNNNQSPSNPATKSPSNQRSVATPDG) is disordered. Thr206 is subject to Phosphothreonine. 3 positions are modified to phosphoserine: Ser212, Ser225, and Ser270. An interaction with Prkar1a and Prkar2a region spans residues 218 to 231 (YYVNRLSSLVIQMA). Position 300 is a phosphotyrosine (Tyr300). Ser301, Ser304, Ser340, Ser430, Ser441, Ser443, Ser462, Ser491, Ser496, and Ser503 each carry phosphoserine. Positions 334–343 (YANQVASDMM) are PKA-RI subunit binding domain. Thr505 carries the post-translational modification Phosphothreonine. Residues 511–536 (KQGTQGRVPNKVCPSKDEKREKISPS) form a disordered region. A compositionally biased stretch (basic and acidic residues) spans 524 to 533 (PSKDEKREKI). A phosphoserine mark is found at Ser536 and Ser581. The tract at residues 583-613 (QYEKSGGGQSSKSLSMKHFESRGAPGPSTCA) is disordered. Residues Ser626, Ser631, Ser648, Ser650, Ser674, Ser677, Ser700, and Ser729 each carry the phosphoserine modification. The disordered stretch occupies residues 655 to 677 (CCDSRSKQAAPVAKRPEDQSQDS).

The protein belongs to the AKAP110 family. As to quaternary structure, interacts with PRKAR1A and PRKAR2A. Interacts with ENO4. Interacts with QRICH2. In terms of processing, phosphorylated by STK33 during sperm flagella assembly. In terms of tissue distribution, expressed in flagella of epididymal sperm.

The protein resides in the cell projection. It is found in the cilium. Its subcellular location is the flagellum. In terms of biological role, major structural component of sperm fibrous sheath. May play a role in sperm motility. This chain is A-kinase anchor protein 4, found in Rattus norvegicus (Rat).